A 211-amino-acid chain; its full sequence is MNVFTSSVGSVEFDHPLLLENDLTSLSINCDDVHCSSRALCYIYDIHSSRHPSIDEHQFLRLLHGPDDAVTLGSFLKTLIWILSHDKNLPEEYRLPTIMMSSSYVKFFTEVKPRPPSTNCWTCRMSKDNLPFTVPSVKGFPPDAELYIVPISDHDGKPVKFDNRKTLYRSPSKKRHKYVISSDKPPLSARYVKYVDSSALESSPGSSPAVL.

Belongs to the tenuiviruses p3 protein family. As to quaternary structure, homodimer.

It localises to the host cytoplasm. In terms of biological role, acts as a suppressor of RNA-mediated gene silencing, also known as post-transcriptional gene silencing (PTGS), presumably through the binding of dsRNA. The chain is Suppressor of RNA silencing p3 from Avena sativa (Oat).